Consider the following 173-residue polypeptide: Regulatory protein RecX (173 aa).

The protein belongs to the RecX family.

It is found in the cytoplasm. Its function is as follows. Modulates RecA activity. This is Regulatory protein RecX from Mycobacterium marinum (strain ATCC BAA-535 / M).